Consider the following 2936-residue polypeptide: Neurobeachin (2936 aa).

A disordered region spans residues Glu961 to Lys985. A compositionally biased stretch (polar residues) spans Asn970 to Ala982. Residues Ser1001 and Ser1004 each carry the phosphoserine modification. Composition is skewed to polar residues over residues Thr1203–Lys1220 and Thr1231–Ala1241. Disordered regions lie at residues Thr1203–Leu1222, Thr1231–Lys1265, and Ile1270–Arg1289. Positions Asp1253–Lys1265 are enriched in basic and acidic residues. Residues Ile1270–Gln1286 show a composition bias toward polar residues. A WD 1 repeat occupies Thr1316–Asp1358. Disordered stretches follow at residues Gln1480 to Ile1521, Pro1639 to Met1667, Val1701 to Ser1721, and Thr1830 to Ala1850. Ser1519 is subject to Phosphoserine. Basic and acidic residues predominate over residues Val1701–Glu1714. Ser1704 and Ser1707 each carry phosphoserine. Over residues Ser1835–Ser1845 the composition is skewed to low complexity. Position 2128 is a phosphoserine (Ser2128). One can recognise a BEACH-type PH domain in the interval Asn2137–Pro2245. One can recognise a BEACH domain in the interval Ala2264 to Arg2553. Ser2565 bears the Phosphoserine mark. WD repeat units follow at residues Gly2708–Gly2751, Gly2768–Glu2808, Glu2850–Ile2889, and Gly2892–Glu2931.

It belongs to the WD repeat neurobeachin family. In terms of assembly, interacts with RII subunit of PKA. As to expression, forebrain, brainstem and cerebellum.

The protein localises to the membrane. Its subcellular location is the endomembrane system. It is found in the postsynaptic cell membrane. In terms of biological role, binds to type II regulatory subunits of protein kinase A and anchors/targets them to the membrane. May anchor the kinase to cytoskeletal and/or organelle-associated proteins. May have a role in membrane trafficking. This Mus musculus (Mouse) protein is Neurobeachin (Nbea).